Reading from the N-terminus, the 338-residue chain is Solute-binding protein Rfer_1840 (338 aa).

An N-terminal signal peptide occupies residues 1 to 25 (MQRRQLLQSMGGLAASTMPFSLAFA). Malonate contacts are provided by residues Arg-47, Tyr-100, Arg-175, Ser-197, 214 to 218 (TSSTS), and Glu-244.

It belongs to the bacterial solute-binding protein 7 family. In terms of assembly, the complex is comprised of an extracytoplasmic solute-binding protein and a heteromeric permease formed by two transmembrane proteins.

It localises to the periplasm. Its function is as follows. Solute-binding protein that binds malonate (in vitro). Probably part of a tripartite ATP-independent periplasmic (TRAP) transport system that mediates solute transport into the cytoplasm. This Albidiferax ferrireducens (strain ATCC BAA-621 / DSM 15236 / T118) (Rhodoferax ferrireducens) protein is Solute-binding protein Rfer_1840.